The primary structure comprises 589 residues: Serine/threonine-protein kinase STE7 homolog (589 aa).

The span at 1-18 shows a compositional bias: basic and acidic residues; that stretch reads MTRTTRIDTQEATKHKDL. 2 disordered regions span residues 1–162 and 185–233; these read MTRT…DPDN and RQHY…ASSQ. Residues 24–33 show a composition bias toward low complexity; it reads PLSLSSNPNP. Residues 57–69 show a composition bias toward polar residues; the sequence is VKSTSGSLRSSDM. Residues 92–121 show a composition bias toward low complexity; sequence PTASSSATSTPTSNITGSSSASSIQFAQKS. 2 stretches are compositionally biased toward polar residues: residues 127–136 and 144–162; these read IVSQTLSRPS and SGYS…DPDN. Residues 185 to 203 are compositionally biased toward basic residues; sequence RQHYQNSHHHLPTTNRKRQ. Over residues 206-220 the composition is skewed to low complexity; that stretch reads ISSISPTKSSAASSS. Residues 221-233 are compositionally biased toward polar residues; it reads LEPQIQSLPASSQ. The region spanning 249-565 is the Protein kinase domain; it reads LLTLKQLGSG…QLLEDKEHFF (317 aa). Residues 255–263 and Lys278 each bind ATP; that span reads LGSGNSGSV. Catalysis depends on Asp374, which acts as the Proton acceptor. At Ser402 the chain carries Phosphoserine. Thr408 is modified (phosphothreonine). The disordered stretch occupies residues 473–499; sequence IAAERNGQNSPSRSRKNKQKGNGYNSY.

The protein belongs to the protein kinase superfamily. STE Ser/Thr protein kinase family. MAP kinase kinase subfamily.

It carries out the reaction L-seryl-[protein] + ATP = O-phospho-L-seryl-[protein] + ADP + H(+). The enzyme catalyses L-threonyl-[protein] + ATP = O-phospho-L-threonyl-[protein] + ADP + H(+). The catalysed reaction is L-tyrosyl-[protein] + ATP = O-phospho-L-tyrosyl-[protein] + ADP + H(+). The sequence is that of Serine/threonine-protein kinase STE7 homolog (HST7) from Candida albicans (strain SC5314 / ATCC MYA-2876) (Yeast).